The sequence spans 264 residues: Ribosome-recycling factor, mitochondrial (264 aa).

It belongs to the RRF family.

It localises to the mitochondrion. Its function is as follows. Necessary for protein synthesis in mitochondria. Functions as a ribosome recycling factor in mitochondria. The sequence is that of Ribosome-recycling factor, mitochondrial (RRF1) from Yarrowia lipolytica (strain CLIB 122 / E 150) (Yeast).